A 218-amino-acid polypeptide reads, in one-letter code: Thiopurine S-methyltransferase (218 aa).

Residues W10, L45, E66, and R123 each coordinate S-adenosyl-L-methionine.

It belongs to the class I-like SAM-binding methyltransferase superfamily. TPMT family.

It localises to the cytoplasm. It carries out the reaction S-adenosyl-L-methionine + a thiopurine = S-adenosyl-L-homocysteine + a thiopurine S-methylether.. This Pseudomonas aeruginosa (strain LESB58) protein is Thiopurine S-methyltransferase.